A 697-amino-acid polypeptide reads, in one-letter code: Elongation factor G (697 aa).

A tr-type G domain is found at 10-285; that stretch reads AKTRNIGIMA…GVIDYLPSPL (276 aa). GTP is bound by residues 19 to 26, 83 to 87, and 137 to 140; these read AHIDAGKT, DTPGH, and NKMD.

Belongs to the TRAFAC class translation factor GTPase superfamily. Classic translation factor GTPase family. EF-G/EF-2 subfamily.

The protein localises to the cytoplasm. Functionally, catalyzes the GTP-dependent ribosomal translocation step during translation elongation. During this step, the ribosome changes from the pre-translocational (PRE) to the post-translocational (POST) state as the newly formed A-site-bound peptidyl-tRNA and P-site-bound deacylated tRNA move to the P and E sites, respectively. Catalyzes the coordinated movement of the two tRNA molecules, the mRNA and conformational changes in the ribosome. This is Elongation factor G from Lactobacillus helveticus (strain DPC 4571).